A 445-amino-acid polypeptide reads, in one-letter code: Trigger factor (445 aa).

One can recognise a PPIase FKBP-type domain in the interval 172 to 257 (GDQVVINFVG…VKSVNWAHLP (86 aa)).

It belongs to the FKBP-type PPIase family. Tig subfamily.

The protein resides in the cytoplasm. It catalyses the reaction [protein]-peptidylproline (omega=180) = [protein]-peptidylproline (omega=0). Functionally, involved in protein export. Acts as a chaperone by maintaining the newly synthesized protein in an open conformation. Functions as a peptidyl-prolyl cis-trans isomerase. This is Trigger factor from Polynucleobacter necessarius subsp. necessarius (strain STIR1).